The chain runs to 363 residues: Serine/threonine-protein kinase SRK2A (363 aa).

In terms of domain architecture, Protein kinase spans 4 to 260 (YELVKDIGAG…IAEIKKHSWF (257 aa)). Residues 10–18 (IGAGNFGVA) and Lys33 each bind ATP. The active-site Proton acceptor is the Asp123. The tract at residues 306 to 363 (SRSIGGFGWGGNGDADGKEEDAEDVEEEEEEVEEEEDDEDEYDKTVKEVHASGEVRIS) is disordered. Positions 310–319 (GGFGWGGNGD) are enriched in gly residues. The span at 322 to 347 (GKEEDAEDVEEEEEEVEEEEDDEDEY) shows a compositional bias: acidic residues. The segment covering 348–363 (DKTVKEVHASGEVRIS) has biased composition (basic and acidic residues).

This sequence belongs to the protein kinase superfamily. Ser/Thr protein kinase family. Interacts with TOPP1. Expressed in seedlings.

It catalyses the reaction L-seryl-[protein] + ATP = O-phospho-L-seryl-[protein] + ADP + H(+). The catalysed reaction is L-threonyl-[protein] + ATP = O-phospho-L-threonyl-[protein] + ADP + H(+). The chain is Serine/threonine-protein kinase SRK2A (SRK2A) from Arabidopsis thaliana (Mouse-ear cress).